The chain runs to 476 residues: Sensor protein CzcS (476 aa).

The first 35 residues, 1–35 (MRPGTSITPLSLTRRLGLFFALVLSIALASMGAFA), serve as a signal peptide directing secretion. The Periplasmic portion of the chain corresponds to 37–158 (YSLAAQLEAR…DRKQVTARFR (122 aa)). The helical transmembrane segment at 159 to 179 (TTLVLGTTVGVILTALVGAAI) threads the bilayer. At 180-476 (TRRELEPAHV…RPSQDRPVVG (297 aa)) the chain is on the cytoplasmic side. The HAMP domain maps to 181–234 (RRELEPAHVLIKQINRISVERLSYRVDMPPKPTEVRDIASAFNAMLQRLEDGYQ). Residues 242 to 455 (DLAHDLRTPL…TRFTLRFPLN (214 aa)) form the Histidine kinase domain. At H245 the chain carries Phosphohistidine; by autocatalysis.

Its subcellular location is the cell inner membrane. It carries out the reaction ATP + protein L-histidine = ADP + protein N-phospho-L-histidine.. Member of the two-component regulatory system CzcS/CzcR involved in the control of cobalt, zinc and cadmium homeostasis. Probably activates CzcR by phosphorylation. In Cupriavidus metallidurans (strain ATCC 43123 / DSM 2839 / NBRC 102507 / CH34) (Ralstonia metallidurans), this protein is Sensor protein CzcS (czcS).